The chain runs to 82 residues: Large ribosomal subunit protein uL23 (82 aa).

It belongs to the universal ribosomal protein uL23 family. As to quaternary structure, part of the 50S ribosomal subunit. Contacts protein L29.

Binds to 23S rRNA. One of the proteins that surrounds the polypeptide exit tunnel on the outside of the ribosome. This Natronomonas pharaonis (strain ATCC 35678 / DSM 2160 / CIP 103997 / JCM 8858 / NBRC 14720 / NCIMB 2260 / Gabara) (Halobacterium pharaonis) protein is Large ribosomal subunit protein uL23.